Consider the following 33-residue polypeptide: GFFALIPKIISSPLFKTLLSAVGSALSSSGDQE.

It belongs to the pardaxin family. Monomer. In aqueous solution exists as a tetramer.

It is found in the secreted. The protein resides in the target cell membrane. Exhibits unusual shark repellent and surfactant properties. Forms voltage-dependent, ion-permeable channels in membranes. At high concentration causes cell membrane lysis. The protein is Pardaxin P-5 of Pardachirus marmoratus (Finless sole).